The primary structure comprises 271 residues: Putative cysteine protease YopT-like blr2140 (271 aa).

A disordered region spans residues 1–81 (MYDRIGGSST…STSSPESPAT (81 aa)). The segment covering 7–29 (GSSTRTSQTDEPSQSVDSGSFTE) has biased composition (polar residues). Residues 65–81 (TSSASEPSTSSPESPAT) show a composition bias toward low complexity. Cys100 is a catalytic residue. Residues 114 to 136 (SPSTRMSALTPGSQTHASAAERQ) form a disordered region. Catalysis depends on residues His213 and Asp228.

This sequence belongs to the peptidase C58 family.

Its function is as follows. Potential cysteine protease, which may play a central role after invasion of host cell. This is Putative cysteine protease YopT-like blr2140 from Bradyrhizobium diazoefficiens (strain JCM 10833 / BCRC 13528 / IAM 13628 / NBRC 14792 / USDA 110).